A 459-amino-acid polypeptide reads, in one-letter code: Probable D-serine dehydratase (459 aa).

Lys-119 carries the N6-(pyridoxal phosphate)lysine modification.

This sequence belongs to the serine/threonine dehydratase family. DsdA subfamily. Pyridoxal 5'-phosphate serves as cofactor.

The catalysed reaction is D-serine = pyruvate + NH4(+). The protein is Probable D-serine dehydratase of Geobacillus stearothermophilus (Bacillus stearothermophilus).